The sequence spans 214 residues: Cytochrome b (214 aa).

The next 4 helical transmembrane spans lie at 31 to 51, 75 to 96, 111 to 131, and 176 to 196; these read FGSM…FLAI, WIMQ…YIHI, WLSG…GYVL, and FFAL…AHIL. 2 residues coordinate heme b: X81 and H95. Positions 180 and 194 each coordinate heme b. H199 contacts a ubiquinone.

It belongs to the cytochrome b family. As to quaternary structure, the cytochrome bc1 complex contains 3 respiratory subunits (MT-CYB, CYC1 and UQCRFS1), 2 core proteins (UQCRC1 and UQCRC2) and probably 6 low-molecular weight proteins. Heme b serves as cofactor.

Its subcellular location is the mitochondrion inner membrane. Component of the ubiquinol-cytochrome c reductase complex (complex III or cytochrome b-c1 complex) that is part of the mitochondrial respiratory chain. The b-c1 complex mediates electron transfer from ubiquinol to cytochrome c. Contributes to the generation of a proton gradient across the mitochondrial membrane that is then used for ATP synthesis. This chain is Cytochrome b (MT-CYB), found in Bothriechis schlegelii (Eyelash palm pitviper).